A 223-amino-acid polypeptide reads, in one-letter code: Agamous-like MADS-box protein AGL11 (223 aa).

In terms of domain architecture, MADS-box spans 1-61; it reads MGRGKIEIKR…GRVYEYSNNN (61 aa). The K-box domain occupies 87-177; sequence AQYYQQESAK…RTKIAEVERL (91 aa).

In terms of tissue distribution, expressed in flowers and seeds. Expressed in endotesta cell layer of developing seeds.

Its subcellular location is the nucleus. Its function is as follows. Probable transcription factor involved in seed development. Plays a role in seed morphogenesis by promoting the correct development of endotesta cell layer, which directs the further development of the seed coat, the endosperm, and consequently the embryo. The sequence is that of Agamous-like MADS-box protein AGL11 from Vitis vinifera (Grape).